The sequence spans 236 residues: Probable fimbrial chaperone EcpE (236 aa).

The N-terminal stretch at 1-27 (MFRRRGVTLTKALLTAVCMLAAPLTQA) is a signal peptide.

The protein belongs to the EcpB/EcpE family.

Its function is as follows. Part of the ecpRABCDE operon, which encodes the E.coli common pilus (ECP). ECP is found in both commensal and pathogenic strains and plays a dual role in early-stage biofilm development and host cell recognition. The chain is Probable fimbrial chaperone EcpE (ecpE) from Escherichia coli (strain K12).